The primary structure comprises 622 residues: Pheromone-processing carboxypeptidase KEX1 (622 aa).

Positions 1 to 23 (MAILSTVPALLFALASWAPTVAA) are cleaved as a signal peptide. Topologically, residues 24–509 (QSAADYFVHE…DEAKWKAYYR (486 aa)) are lumenal. N111 carries an N-linked (GlcNAc...) asparagine glycan. Residues S175 and D375 contribute to the active site. 2 N-linked (GlcNAc...) asparagine glycosylation sites follow: N426 and N434. H437 is a catalytic residue. The disordered stretch occupies residues 465–492 (TPTDSRLDGEQGPATSVGDIGKNGTSAD). N-linked (GlcNAc...) asparagine glycosylation is present at N487. A helical membrane pass occupies residues 510 to 530 (SGEIVLVIVIIAAGAWGWYVW). Over 531 to 622 (RERRKRRGYS…SRSNGGRSGR (92 aa)) the chain is Cytoplasmic. The interval 539–622 (YSGIMGNTPP…SRSNGGRSGR (84 aa)) is disordered. Residues 559-571 (EGFRDRRTGRDVE) show a composition bias toward basic and acidic residues.

Belongs to the peptidase S10 family.

It localises to the golgi apparatus. The protein localises to the trans-Golgi network membrane. It carries out the reaction Preferential release of a C-terminal arginine or lysine residue.. In terms of biological role, protease with a carboxypeptidase B-like function involved in the C-terminal processing of the lysine and arginine residues from protein precursors. Promotes cell fusion and is involved in the programmed cell death. In Colletotrichum graminicola (strain M1.001 / M2 / FGSC 10212) (Maize anthracnose fungus), this protein is Pheromone-processing carboxypeptidase KEX1 (KEX1).